A 239-amino-acid chain; its full sequence is ATP synthase subunit a (239 aa).

5 consecutive transmembrane segments (helical) span residues 13–33 (IWFD…VFAF), 75–95 (FHLM…LGLV), 113–133 (DPIV…FFGM), 174–194 (GNIF…ASVG), and 208–230 (WVAF…SMVY).

The protein belongs to the ATPase A chain family. In terms of assembly, F-type ATPases have 2 components, CF(1) - the catalytic core - and CF(0) - the membrane proton channel. CF(1) has five subunits: alpha(3), beta(3), gamma(1), delta(1), epsilon(1). CF(0) has three main subunits: a(1), b(2) and c(9-12). The alpha and beta chains form an alternating ring which encloses part of the gamma chain. CF(1) is attached to CF(0) by a central stalk formed by the gamma and epsilon chains, while a peripheral stalk is formed by the delta and b chains.

The protein localises to the cell membrane. In terms of biological role, key component of the proton channel; it plays a direct role in the translocation of protons across the membrane. This chain is ATP synthase subunit a, found in Enterococcus faecalis (strain ATCC 700802 / V583).